The primary structure comprises 504 residues: MIITILIAIFVIIYVRKNISQAKIAEAEAKSKKIIIDSEKNAEAIKKEAILEAKEEVHRIRNDFEKESRERRNEIQRLERRIIQREELLDKKSEAIENKEEVLNKKQQDINEKAASIDELYDKQREELEKLSNLSSDEARELLLEETKKEIRHDLAVMIKEMENKAKEEADKKAKEIISTAIQRCAADHVAESTVHVVSLPNDEMKGRIIGREGRNIRALETLTGVDLIIDDTPEAVILSGFDPIRRQVARIALEKLIIDGRIHPARIEEMVEKAKQEVENDIKEEGEQATFETGVHGLHQELVKLLGRLKYRTSYGQNVLKHSMEVAYLAGLMASELGMDPTLAKRSGLLHDIGKAVDHEIEGPHALIGSEMAKKYHESSVVVNAIAAHHGDVEYESIEAILVQAADAISAARPGARRETLEAYIKRLEKLEEIANSYEGVEKSYAIQAGREVRIMVKPEDIDDYGCIEMSKNIVKRIESELEYPGQIKVNIIREVRAVEYAK.

The KH domain occupies Thr-194 to Val-279. An HD domain is found at Val-320–Ala-413.

This sequence belongs to the RNase Y family.

In terms of biological role, endoribonuclease that initiates mRNA decay. This is Ribonuclease Y from Clostridium novyi (strain NT).